Reading from the N-terminus, the 237-residue chain is Chaplin-B (237 aa).

The signal sequence occupies residues 1-26; it reads MRRVTRNGVLAVAASGALAVTMPAYA. Residues 42 to 82 form the Chaplin 1 domain; that stretch reads SPGLISGNTVQLPVDVPVDVCGNTVNVVGLLNPAAGNGCAD. 2 disordered regions span residues 81 to 127 and 148 to 216; these read ADSG…LSGN and GIGN…TLAG. Residues 101 to 115 show a composition bias toward low complexity; the sequence is GSATEATSGGAAAEG. The region spanning 120–160 is the Chaplin 2 domain; the sequence is SPGVLSGNGVQLPVHLPVNVSGNSVNVVGIGNPAVGNESTN. Over residues 169-178 the composition is skewed to pro residues; that stretch reads VRPPAEPEPS. The short motif at 202 to 206 is the LPXTG sorting signal element; that stretch reads LAHTG. Thr-205 is modified (pentaglycyl murein peptidoglycan amidated threonine). Residues 206 to 237 constitute a propeptide, removed by sortase; it reads GTDRTLPTLAGGAALVLGGTVLYRRFRPGSGD.

The protein belongs to the chaplin family. Long chaplin subfamily.

The protein resides in the secreted. The protein localises to the cell wall. In terms of biological role, one of 8 partially redundant surface-active proteins required for efficient formation of aerial mycelium; the short chaplins assemble into a hydrophobic, amyloidal fibrillar surface layer that envelopes and protects aerial hyphae and spores, presumably anchored to the long chaplins. Chaplins have an overlapping function with the surface-active SapB peptide; chaplins are essential on minimal medium while on rich medium both chaplins and SapB are required for efficient aerial hyphae formation. The long chaplins (ChpA, ChpB, ChpC) are not absolutely necessary for short chaplin localization or rodlet formation, but probably play a role in initiating aerial hyphae development. Chaplins are also involved in cell attachment to a hydrophobic surface. This Streptomyces coelicolor (strain ATCC BAA-471 / A3(2) / M145) protein is Chaplin-B.